The sequence spans 116 residues: uncharacterized protein (116 aa).

The next 2 membrane-spanning stretches (helical) occupy residues leucine 55–phenylalanine 77 and phenylalanine 87–leucine 109.

Its subcellular location is the membrane. This is an uncharacterized protein from Saccharomyces cerevisiae (strain ATCC 204508 / S288c) (Baker's yeast).